The sequence spans 666 residues: Mitogen-activated protein kinase kinase kinase ANP1 (666 aa).

Residues 69 to 331 form the Protein kinase domain; it reads WRKGQLIGRG…ASELLKHPFV (263 aa). ATP contacts are provided by residues 75–83 and K98; that span reads IGRGAFGTV. Residues 101 to 131 are a coiled coil; that stretch reads LIAANFASKEKTQAHIQELEEEVKLLKNLSH. Glycyl lysine isopeptide (Lys-Gly) (interchain with G-Cter in ubiquitin) cross-links involve residues K109 and K111. D197 (proton acceptor) is an active-site residue. Basic and acidic residues predominate over residues 452 to 464; the sequence is KFDESPGNGEKES. Disordered stretches follow at residues 452-481, 536-592, and 635-666; these read KFDE…DDDE, GFLK…DGVS, and QEIM…SPGK. Residues 538–558 are compositionally biased toward low complexity; sequence LKLPPKSRSPSRGPLGGSPSR. Polar residues predominate over residues 560-569; the sequence is TDATSCSKSP. A coiled-coil region spans residues 620–643; that stretch reads KKWKEELDQELERKRQEIMRQAGL. Over residues 647 to 660 the composition is skewed to basic and acidic residues; it reads PRDRGMSRQREKSR.

Belongs to the protein kinase superfamily. STE Ser/Thr protein kinase family. MAP kinase kinase kinase subfamily. As to expression, expressed in roots, inflorescence stems, flower buds and flowers. Low amount in rosette and cauline leaves.

The enzyme catalyses L-seryl-[protein] + ATP = O-phospho-L-seryl-[protein] + ADP + H(+). It catalyses the reaction L-threonyl-[protein] + ATP = O-phospho-L-threonyl-[protein] + ADP + H(+). Functionally, may be involved in an oxidative stress-mediated signaling cascade that phosphorylates downstream MAP kinases MPK3 and MPK6. May suppress auxin signaling that promotes cell cycle. Functionally redundant to ANP2 and ANP3 in the positive regulation of cytokinesis. The protein is Mitogen-activated protein kinase kinase kinase ANP1 (ANP1) of Arabidopsis thaliana (Mouse-ear cress).